The chain runs to 59 residues: Large ribosomal subunit protein uL30 (59 aa).

This sequence belongs to the universal ribosomal protein uL30 family. In terms of assembly, part of the 50S ribosomal subunit.

The protein is Large ribosomal subunit protein uL30 of Brachyspira hyodysenteriae (strain ATCC 49526 / WA1).